The chain runs to 232 residues: uncharacterized protein (232 aa).

Residues 209–229 form a helical membrane-spanning segment; that stretch reads ATISTPALGYAYFLFTLTLVF.

It localises to the host membrane. This is an uncharacterized protein from Saccharolobus islandicus (Sulfolobus islandicus).